A 259-amino-acid chain; its full sequence is Flap endonuclease Xni (259 aa).

Residue aspartate 109 coordinates Mg(2+). Residues 165 to 255 (VKPQQLSDYW…FNLQDLRFTA (91 aa)) form the 5'-3' exonuclease domain. Residues leucine 176, isoleucine 187, and isoleucine 190 each contribute to the K(+) site. The segment at 189–194 (GIGPKA) is interaction with DNA.

Belongs to the Xni family. Mg(2+) serves as cofactor. K(+) is required as a cofactor.

Its function is as follows. Has flap endonuclease activity. During DNA replication, flap endonucleases cleave the 5'-overhanging flap structure that is generated by displacement synthesis when DNA polymerase encounters the 5'-end of a downstream Okazaki fragment. This chain is Flap endonuclease Xni, found in Vibrio vulnificus (strain YJ016).